A 677-amino-acid chain; its full sequence is Methionine--tRNA ligase (677 aa).

Positions 15–25 (PYANGSIHLGH) match the 'HIGH' region motif. Cys146, Cys149, Cys159, and Cys162 together coordinate Zn(2+). The 'KMSKS' region motif lies at 333–337 (KMSKS). Lys336 serves as a coordination point for ATP. The tRNA-binding domain occupies 575–677 (DFAKIDLRVA…DGAKPGQQVK (103 aa)).

It belongs to the class-I aminoacyl-tRNA synthetase family. MetG type 1 subfamily. In terms of assembly, homodimer. The cofactor is Zn(2+).

It is found in the cytoplasm. The enzyme catalyses tRNA(Met) + L-methionine + ATP = L-methionyl-tRNA(Met) + AMP + diphosphate. Its function is as follows. Is required not only for elongation of protein synthesis but also for the initiation of all mRNA translation through initiator tRNA(fMet) aminoacylation. The polypeptide is Methionine--tRNA ligase (Salmonella paratyphi B (strain ATCC BAA-1250 / SPB7)).